Here is a 430-residue protein sequence, read N- to C-terminus: Glutamate-1-semialdehyde 2,1-aminomutase (430 aa).

K265 carries the N6-(pyridoxal phosphate)lysine modification.

The protein belongs to the class-III pyridoxal-phosphate-dependent aminotransferase family. HemL subfamily. Homodimer. Pyridoxal 5'-phosphate serves as cofactor.

The protein resides in the cytoplasm. The enzyme catalyses (S)-4-amino-5-oxopentanoate = 5-aminolevulinate. The protein operates within porphyrin-containing compound metabolism; protoporphyrin-IX biosynthesis; 5-aminolevulinate from L-glutamyl-tRNA(Glu): step 2/2. This chain is Glutamate-1-semialdehyde 2,1-aminomutase, found in Shewanella baltica (strain OS195).